We begin with the raw amino-acid sequence, 386 residues long: Antilisterial bacteriocin subtilosin biosynthesis protein AlbE (386 aa).

Functionally, involved in the production of the bacteriocin subtilosin. In Bacillus subtilis (strain 168), this protein is Antilisterial bacteriocin subtilosin biosynthesis protein AlbE (albE).